The following is a 1029-amino-acid chain: Protein phosphatase 1 regulatory subunit 12A (1029 aa).

Residues 35–38 (KVKF) carry the KVKF motif motif. ANK repeat units follow at residues 39-68 (DDGA…DINY), 72-101 (DGLT…NINQ), 105-134 (EGWI…HVGA), 138-164 (EGDT…RQGV), 198-227 (SGGT…DVNI), and 231-260 (DGWT…DMET). 2 positions are modified to (3S)-3-hydroxyasparagine; by HIF1AN: Asn-67 and Asn-100. Asn-226 carries the (3S)-3-hydroxyasparagine; by HIF1AN modification. Residues 290-786 (LHSEKRDKKS…APSSSSLSTL (497 aa)) are disordered. Basic and acidic residues predominate over residues 291 to 300 (HSEKRDKKSP). Ser-299 is subject to Phosphoserine. The segment covering 302-314 (IESTANMENNQPQ) has biased composition (polar residues). Residues 318-353 (KNKETLIIEPEKNASRIESLEHEKADEEEEGKKDES) are compositionally biased toward basic and acidic residues. Over residues 357-369 (SEEDEEDDSESEA) the composition is skewed to acidic residues. Over residues 385 to 402 (TSSTQAAPAAVTAPTLSS) the composition is skewed to low complexity. A phosphoserine mark is found at Ser-422 and Ser-432. Basic and acidic residues predominate over residues 422 to 432 (SPKEEERKDES). The residue at position 443 (Thr-443) is a Phosphothreonine. Position 445 is a phosphoserine; by NUAK1 (Ser-445). Tyr-446 is subject to Phosphotyrosine. The segment covering 469–480 (RSASSPRLSSSL) has biased composition (low complexity). Ser-472 bears the Phosphoserine; by NUAK1 mark. Ser-473 is subject to Phosphoserine; by CDK1. Ser-477 bears the Phosphoserine mark. The span at 481-491 (DNKEKEKDNKG) shows a compositional bias: basic and acidic residues. A phosphoserine mark is found at Ser-507 and Ser-509. The segment covering 540-551 (NSSINEGSTYHR) has biased composition (polar residues). Low complexity predominate over residues 564 to 578 (SCSVPSTTSTPTVTS). Residues 585–594 (SLPSSTSTAA) are compositionally biased toward polar residues. The span at 596–610 (TPPGSSSAGTQSSTS) shows a compositional bias: low complexity. Phosphoserine is present on residues Ser-601 and Ser-618. Over residues 614 to 625 (WAEDSTEKEKDS) the composition is skewed to basic and acidic residues. Low complexity predominate over residues 626 to 656 (APTAVTIPVAPTVVNAAAPSTTTLTTTTAGT). Over residues 671–680 (VRDEESESQR) the composition is skewed to basic and acidic residues. The interaction with ROCK2 stretch occupies residues 680 to 863 (RKARSRQARQ…VSFWTQDSDE (184 aa)). Over residues 681-691 (KARSRQARQSR) the composition is skewed to basic residues. 2 positions are modified to phosphoserine; by PKA and PKG; in vitro: Ser-690 and Ser-693. Thr-694 carries the post-translational modification Phosphothreonine; by ROCK1, ROCK2, CDC42BP, ZIPK/DAPK3 and RAF1. Positions 716–765 (RTREQENEEKEKEEKEKQDKEKQEEKKESEASREDEYKQKYSRTYDETYT) are enriched in basic and acidic residues. Residues 771–786 (STSSSSAPSSSSLSTL) show a composition bias toward low complexity. A Phosphoserine modification is found at Ser-801. A disordered region spans residues 808-927 (AYSRGLAKEN…PYSSRLEKDD (120 aa)). Residues 813–839 (LAKENEREGEKKEEEKEGEDKSQPKSI) are compositionally biased toward basic and acidic residues. The segment covering 840–851 (RERRRPREKRRS) has biased composition (basic residues). Ser-851 is modified (phosphoserine; by ROCK2). 2 positions are modified to phosphoserine: Ser-861 and Ser-870. Positions 866-882 (QERQSDTEDGSSKRETQ) are enriched in basic and acidic residues. A compositionally biased stretch (low complexity) spans 883-897 (TDSVSRYDSSSTSSS). Residues Ser-902 and Ser-907 each carry the phosphoserine modification. Position 909 is a phosphoserine; by NUAK1 (Ser-909). A compositionally biased stretch (basic and acidic residues) spans 913-927 (LEDRKPYSSRLEKDD). Ser-994 is subject to Phosphoserine.

PP1 comprises a catalytic subunit, PPP1CA, PPP1CB or PPP1CC, and one or several targeting or regulatory subunits. PPP1R12A mediates binding to myosin. Interacts with ARHA and CIT. Binds PPP1R12B, ROCK1 and IL16. Interacts directly with PRKG1. Non-covalent dimer of 2 dimers; PRKG1-PRKG1 and PPP1R12A-PPP1R12A. Interacts with SMTNL1. Interacts with PPP1CB; the interaction is direct. Interacts (when phosphorylated at Ser-445, Ser-472 and Ser-910) with 14-3-3. Interacts with ROCK1 and ROCK2. Interacts with isoform 1 and isoform 2 of ZIPK/DAPK3. Interacts with RAF1. Interacts with HIF1AN. Interacts with NCKAP1L. Post-translationally, phosphorylated by CIT (Rho-associated kinase). Phosphorylated cooperatively by ROCK1 and CDC42BP on Thr-694. Phosphorylated on upon DNA damage, probably by ATM or ATR. In vitro, phosphorylation of Ser-693 by PKA and PKG appears to prevent phosphorylation of the inhibitory site Thr-694, probably mediated by PRKG1. Phosphorylation at Ser-445, Ser-472 and Ser-909 by NUAK1 promotes interaction with 14-3-3, leading to inhibit interaction with myosin light chain MLC2, preventing dephosphorylation of MLC2. May be phosphorylated at Thr-694 by DMPK; may inhibit the myosin phosphatase activity. Phosphorylated at Ser-473 by CDK1 during mitosis, creating docking sites for the POLO box domains of PLK1. Subsequently, PLK1 binds and phosphorylates PPP1R12A. As to expression, expressed in striated and vascular smooth muscle, specificcally in type 2a fibers (at protein level). Expression levels are 20-30% higher in developed males than females (at protein level).

It is found in the cytoplasm. The protein localises to the cytoskeleton. The protein resides in the stress fiber. Key regulator of protein phosphatase 1C (PPP1C). Mediates binding to myosin. As part of the PPP1C complex, involved in dephosphorylation of PLK1. Capable of inhibiting HIF1AN-dependent suppression of HIF1A activity. In Mus musculus (Mouse), this protein is Protein phosphatase 1 regulatory subunit 12A.